Consider the following 509-residue polypeptide: Cobyric acid synthase (509 aa).

A GATase cobBQ-type domain is found at 262–459 (EIKVGIIKLP…IHGIFENDIW (198 aa)). Cysteine 343 serves as the catalytic Nucleophile. The active site involves histidine 451.

This sequence belongs to the CobB/CobQ family. CobQ subfamily.

It participates in cofactor biosynthesis; adenosylcobalamin biosynthesis. Catalyzes amidations at positions B, D, E, and G on adenosylcobyrinic A,C-diamide. NH(2) groups are provided by glutamine, and one molecule of ATP is hydrogenolyzed for each amidation. This is Cobyric acid synthase from Prochlorococcus marinus (strain MIT 9312).